The following is a 373-amino-acid chain: Cobalt-precorrin-5B C(1)-methyltransferase (373 aa).

Belongs to the CbiD family.

The enzyme catalyses Co-precorrin-5B + S-adenosyl-L-methionine = Co-precorrin-6A + S-adenosyl-L-homocysteine. Its pathway is cofactor biosynthesis; adenosylcobalamin biosynthesis; cob(II)yrinate a,c-diamide from sirohydrochlorin (anaerobic route): step 6/10. Catalyzes the methylation of C-1 in cobalt-precorrin-5B to form cobalt-precorrin-6A. This is Cobalt-precorrin-5B C(1)-methyltransferase from Listeria welshimeri serovar 6b (strain ATCC 35897 / DSM 20650 / CCUG 15529 / CIP 8149 / NCTC 11857 / SLCC 5334 / V8).